The following is a 228-amino-acid chain: Biopolymer transport protein exbB1 (228 aa).

3 helical membrane-spanning segments follow: residues Leu11 to Glu31, Leu116 to Ile136, and Leu158 to Gly178.

The protein belongs to the ExbB/TolQ family. In terms of assembly, the accessory proteins ExbB and ExbD seem to form a complex with TonB.

It localises to the cell inner membrane. In terms of biological role, involved in the TonB-dependent energy-dependent transport of various receptor-bound substrates. Protects ExbD from proteolytic degradation and functionally stabilizes TonB. This is Biopolymer transport protein exbB1 (exbB1) from Vibrio cholerae serotype O1 (strain ATCC 39315 / El Tor Inaba N16961).